A 137-amino-acid polypeptide reads, in one-letter code: ATP synthase epsilon chain (137 aa).

It belongs to the ATPase epsilon chain family. In terms of assembly, F-type ATPases have 2 components, CF(1) - the catalytic core - and CF(0) - the membrane proton channel. CF(1) has five subunits: alpha(3), beta(3), gamma(1), delta(1), epsilon(1). CF(0) has three main subunits: a, b and c.

It is found in the cell membrane. In terms of biological role, produces ATP from ADP in the presence of a proton gradient across the membrane. This Streptococcus agalactiae serotype III (strain NEM316) protein is ATP synthase epsilon chain.